Here is a 220-residue protein sequence, read N- to C-terminus: Large ribosomal subunit protein uL3 (220 aa).

The interval 130–156 is disordered; sequence AIKRHGQSRGPMSHGSHFHRAPGSVGM.

This sequence belongs to the universal ribosomal protein uL3 family. As to quaternary structure, part of the 50S ribosomal subunit. Forms a cluster with proteins L14 and L19.

One of the primary rRNA binding proteins, it binds directly near the 3'-end of the 23S rRNA, where it nucleates assembly of the 50S subunit. This is Large ribosomal subunit protein uL3 from Staphylococcus aureus (strain Mu3 / ATCC 700698).